The following is a 610-amino-acid chain: Menin (610 aa).

Residues 214-390 (GVAERSWLYL…SLLEAGEERP (177 aa)) are interaction with FANCD2. Positions 462-552 (AEAAEAEELW…SPPPEGPVLT (91 aa)) are disordered. Residues 484 to 500 (RRESKPEEPPPPKKPAL) are compositionally biased toward basic and acidic residues. Serine 487 and serine 543 each carry phosphoserine. Pro residues predominate over residues 537–548 (APAPAASPPPEG). The residue at position 594 (threonine 594) is a Phosphothreonine.

In terms of assembly, component of the MLL-HCF complex, at least composed of KMT2A/MLL1, MEN1, ASH2L, RBBP5, DPY30, WDR5, HCFC1 and HCFC2. Component of the menin-associated histone methyltransferase complex, at least composed of KMT2B/MLL4, MEN1, ASH2L, RBBP5, DPY30 and WDR5. Interacts with POLR2B. Interacts with POLR2A phosphorylated at 'Ser-5', but not with the unphosphorylated, nor 'Ser-2' phosphorylated POLR2A forms. Interacts with FANCD2 and DBF4. Interacts with SMAD3, but not with SMAD2, nor SMAD4. Directly interacts with NFKB1, NFKB2 and RELA. Interacts with JUND (via MBM motif); inhibits the interaction of JUND with MAPK10 and the phosphorylation of JUND by MAP kinases MAPK8 and MAPK10. Interacts with KMT2A (via MBM motif). The KMT2A-MEN1 complex interacts with PSIP1 with a greater affinity as MEN1 enhances interaction of KMT2A with PSIP1.

Its subcellular location is the nucleus. In terms of biological role, essential component of a MLL/SET1 histone methyltransferase (HMT) complex, a complex that specifically methylates 'Lys-4' of histone H3 (H3K4). Functions as a transcriptional regulator. Binds to the TERT promoter and represses telomerase expression. Plays a role in TGFB1-mediated inhibition of cell-proliferation, possibly regulating SMAD3 transcriptional activity. Represses JUND-mediated transcriptional activation on AP1 sites, as well as that mediated by NFKB subunit RELA. Positively regulates HOXC8 and HOXC6 gene expression. May be involved in normal hematopoiesis through the activation of HOXA9 expression. May be involved in DNA repair. The polypeptide is Menin (MEN1) (Canis lupus familiaris (Dog)).